We begin with the raw amino-acid sequence, 906 residues long: MSRFFANGSDSESESSEEEVQATNFNKASAFQFSDDEEEVKRVVRSTKEKRYENLTNIIKTIRNHKKIKDIPNTLSSFEDLTKAYTKALPVISKEENGITPRFYIRCLAELEDFINEVWEDREGRKNLSKNNSKSLGTLRQKVRKYIKDFEDDLSRFREAPDQESEAEDEEAAQDSDGGDAGDDSDAGIKREPAEAAPKVAKTVPAKAAPADDDDSDDSIDWDSDSETETESSDDENQYQNMRERFLKRTTEKEEKDDDKRKDKRKEQKIKIRKRPEDDEDGEWETVVKGHVVEKPKMFEKDAEIDIPLVLAKLVEIMSARGKKRTDRRLQIDLLFELRDISDQHNLGTAVSVKIHFNIISAIFDYNQKISEPMKLEHWALLLEVMQSMLKLLLVNPDIHMSESVAEEHEELATSPFYVRGCPLAAVERLDDEFTKLLKECDPHSNDYVSRLKDEVNVVKTIELVLQYFENDGNNNERCRIYLRKIEHLYYKFDPEVLKKKRGEIPQNTQTSVDVMDRLCKFIYAKDDTDRIRTRAILAHIYHHAMHDNWFQARDLVLMSHLQDNIDAADPATRILYNRMMANLGLCAFRQENIKDAHHCLVDLMVTGKPKELLAQGLLPQRQHERSAEQEKIEKQRQMPFHMHINLELLECVYLVSAMLLEIPYIAAHEFDARRRMISKTFYQQLRSSERQSLVGPPESMREHVVAAAKAMRCGNWQACANFIVNKKMNTKVWDLFYESDRVREMLTKFIKEESLRTYLFTYSNVYTSISIPSLAQMYELPVQKVHSIISKMIINEELMASLDDPTETVVMHRSEPSRLQALAMQFVDKVTNLVDVNEKVFDMKQGNFFQRGNMGNRGDRGYNRNQDGNWGGQLRDIKRIRGQRIQRGRKHQQQQQQQVQTIDEE.

The disordered stretch occupies residues 1-22 (MSRFFANGSDSESESSEEEVQA). The segment covering 11–20 (SESESSEEEV) has biased composition (acidic residues). Ser34, Ser165, Ser176, and Ser185 each carry phosphoserine. The tract at residues 158–283 (REAPDQESEA…KRPEDDEDGE (126 aa)) is disordered. A compositionally biased stretch (acidic residues) spans 162–186 (DQESEAEDEEAAQDSDGGDAGDDSD). A compositionally biased stretch (low complexity) spans 195-209 (EAAPKVAKTVPAKAA). The span at 211-237 (ADDDDSDDSIDWDSDSETETESSDDEN) shows a compositional bias: acidic residues. The span at 242-270 (MRERFLKRTTEKEEKDDDKRKDKRKEQKI) shows a compositional bias: basic and acidic residues. The 177-residue stretch at 641-817 (FHMHINLELL…ETVVMHRSEP (177 aa)) folds into the PCI domain. Disordered regions lie at residues 853–873 (GNMG…NWGG) and 887–906 (QRGR…IDEE). The span at 894-906 (QQQQQQVQTIDEE) shows a compositional bias: low complexity.

The protein belongs to the eIF-3 subunit C family. In terms of assembly, component of the eukaryotic translation initiation factor 3 (eIF-3) complex. The eIF-3 complex interacts with pix.

Its subcellular location is the cytoplasm. Component of the eukaryotic translation initiation factor 3 (eIF-3) complex, which is involved in protein synthesis of a specialized repertoire of mRNAs and, together with other initiation factors, stimulates binding of mRNA and methionyl-tRNAi to the 40S ribosome. The eIF-3 complex specifically targets and initiates translation of a subset of mRNAs involved in cell proliferation. This chain is Eukaryotic translation initiation factor 3 subunit C, found in Drosophila ananassae (Fruit fly).